We begin with the raw amino-acid sequence, 340 residues long: 4-hydroxythreonine-4-phosphate dehydrogenase (340 aa).

2 residues coordinate substrate: H141 and T142. The a divalent metal cation site is built by H177, H222, and H277. Residues K285, N294, and R303 each contribute to the substrate site.

It belongs to the PdxA family. In terms of assembly, homodimer. It depends on Zn(2+) as a cofactor. The cofactor is Mg(2+). Requires Co(2+) as cofactor.

Its subcellular location is the cytoplasm. The catalysed reaction is 4-(phosphooxy)-L-threonine + NAD(+) = 3-amino-2-oxopropyl phosphate + CO2 + NADH. It participates in cofactor biosynthesis; pyridoxine 5'-phosphate biosynthesis; pyridoxine 5'-phosphate from D-erythrose 4-phosphate: step 4/5. Its function is as follows. Catalyzes the NAD(P)-dependent oxidation of 4-(phosphooxy)-L-threonine (HTP) into 2-amino-3-oxo-4-(phosphooxy)butyric acid which spontaneously decarboxylates to form 3-amino-2-oxopropyl phosphate (AHAP). This is 4-hydroxythreonine-4-phosphate dehydrogenase from Maricaulis maris (strain MCS10) (Caulobacter maris).